The chain runs to 185 residues: Protein DP71L (185 aa).

Residues 1 to 15 (MSRRNKKRSRRRRKK) are compositionally biased toward basic residues. The disordered stretch occupies residues 1 to 38 (MSRRNKKRSRRRRKKPLNDIQPGPSKSSAQDEPIKSVS). Important for host CHOP inhibition regions lie at residues 126–128 (VHF) and 170–174 (LSTVF).

This sequence belongs to the asfivirus DP71L family. In terms of assembly, interacts (via C-terminus) with host PPP1CB.

Functionally, interacts with the host phosphatase PP1 catalytic subunit (PPP1CB) and recruits it to dephosphorylate EIF2S1/eIF2alpha and therefore restores the host translation that has been shut-down by the host. Also inhibits the EIF2S1/eIF2alpha-ATF4-DDIT3/CHOP pathway. The chain is Protein DP71L from African swine fever virus (isolate Pig/Kenya/KEN-50/1950) (ASFV).